The primary structure comprises 268 residues: 4-hydroxy-tetrahydrodipicolinate reductase (268 aa).

NAD(+) is bound by residues 8–13 (GACGKM), D34, 95–97 (GTT), and 121–124 (APNF). The active-site Proton donor/acceptor is H151. H152 lines the (S)-2,3,4,5-tetrahydrodipicolinate pocket. K155 serves as the catalytic Proton donor. Position 161–162 (161–162 (GT)) interacts with (S)-2,3,4,5-tetrahydrodipicolinate.

The protein belongs to the DapB family.

Its subcellular location is the cytoplasm. It carries out the reaction (S)-2,3,4,5-tetrahydrodipicolinate + NAD(+) + H2O = (2S,4S)-4-hydroxy-2,3,4,5-tetrahydrodipicolinate + NADH + H(+). The enzyme catalyses (S)-2,3,4,5-tetrahydrodipicolinate + NADP(+) + H2O = (2S,4S)-4-hydroxy-2,3,4,5-tetrahydrodipicolinate + NADPH + H(+). Its pathway is amino-acid biosynthesis; L-lysine biosynthesis via DAP pathway; (S)-tetrahydrodipicolinate from L-aspartate: step 4/4. Catalyzes the conversion of 4-hydroxy-tetrahydrodipicolinate (HTPA) to tetrahydrodipicolinate. The sequence is that of 4-hydroxy-tetrahydrodipicolinate reductase from Dictyoglomus turgidum (strain DSM 6724 / Z-1310).